A 221-amino-acid chain; its full sequence is Probable septum site-determining protein MinC (221 aa).

It belongs to the MinC family. In terms of assembly, interacts with MinD and FtsZ.

Functionally, cell division inhibitor that blocks the formation of polar Z ring septums. Rapidly oscillates between the poles of the cell to destabilize FtsZ filaments that have formed before they mature into polar Z rings. Prevents FtsZ polymerization. The polypeptide is Probable septum site-determining protein MinC (Shewanella frigidimarina (strain NCIMB 400)).